Reading from the N-terminus, the 239-residue chain is 2,3,4,5-tetrahydropyridine-2,6-dicarboxylate N-acetyltransferase (239 aa).

This sequence belongs to the transferase hexapeptide repeat family. DapH subfamily.

It catalyses the reaction (S)-2,3,4,5-tetrahydrodipicolinate + acetyl-CoA + H2O = L-2-acetamido-6-oxoheptanedioate + CoA. The protein operates within amino-acid biosynthesis; L-lysine biosynthesis via DAP pathway; LL-2,6-diaminopimelate from (S)-tetrahydrodipicolinate (acetylase route): step 1/3. Functionally, catalyzes the transfer of an acetyl group from acetyl-CoA to tetrahydrodipicolinate. The protein is 2,3,4,5-tetrahydropyridine-2,6-dicarboxylate N-acetyltransferase of Staphylococcus saprophyticus subsp. saprophyticus (strain ATCC 15305 / DSM 20229 / NCIMB 8711 / NCTC 7292 / S-41).